The chain runs to 312 residues: Magnesium protoporphyrin IX methyltransferase, chloroplastic (312 aa).

The transit peptide at 1–39 (MPFAPSLLSSSSSVSQFLPRFPNATRFNVTPRSRAATVV) directs the protein to the chloroplast.

The protein belongs to the class I-like SAM-binding methyltransferase superfamily. Magnesium protoporphyrin O-methyltransferase family.

The protein resides in the plastid. It localises to the chloroplast membrane. The protein localises to the chloroplast thylakoid membrane. The enzyme catalyses Mg-protoporphyrin IX + S-adenosyl-L-methionine = Mg-protoporphyrin IX 13-monomethyl ester + S-adenosyl-L-homocysteine. It functions in the pathway porphyrin-containing compound metabolism; chlorophyll biosynthesis. With respect to regulation, regulated by the folate status via an increased concentration of S-adenosyl-homocysteine (AdoHcy), a potent inhibitor of most AdoMet-dependent methyltransferases. Converts Mg-protoporphyrin IX to Mg-protoporphyrin IX methylester using S-adenosyl-L-methionine as a cofactor. Involved in chloroplast-to-nucleus signaling by acting as a negative effector of nuclear photosynthetic gene expression. The protein is Magnesium protoporphyrin IX methyltransferase, chloroplastic (CHLM) of Arabidopsis thaliana (Mouse-ear cress).